A 225-amino-acid polypeptide reads, in one-letter code: Nuclear protein UL4 homolog (225 aa).

This sequence belongs to the alphaherpesvirinae HHV-1 UL4 family.

It is found in the host nucleus. This chain is Nuclear protein UL4 homolog, found in Equus caballus (Horse).